A 45-amino-acid chain; its full sequence is Large ribosomal subunit protein bL34 (45 aa).

This sequence belongs to the bacterial ribosomal protein bL34 family.

In Salinispora tropica (strain ATCC BAA-916 / DSM 44818 / JCM 13857 / NBRC 105044 / CNB-440), this protein is Large ribosomal subunit protein bL34.